The following is a 901-amino-acid chain: Protein translocase subunit SecA (901 aa).

ATP contacts are provided by residues Q85, 103–107 (GEGKT), and D492. The disordered stretch occupies residues 828–901 (GLVTDDGGNP…PKNRRNKKRR (74 aa)). The span at 871–881 (DGQKPRGEGNR) shows a compositional bias: basic and acidic residues. Positions 882–901 (AARRSAASKKPKNRRNKKRR) are enriched in basic residues.

This sequence belongs to the SecA family. In terms of assembly, monomer and homodimer. Part of the essential Sec protein translocation apparatus which comprises SecA, SecYEG and auxiliary proteins SecDF. Other proteins may also be involved.

The protein resides in the cell membrane. Its subcellular location is the cytoplasm. The enzyme catalyses ATP + H2O + cellular proteinSide 1 = ADP + phosphate + cellular proteinSide 2.. Its function is as follows. Part of the Sec protein translocase complex. Interacts with the SecYEG preprotein conducting channel. Has a central role in coupling the hydrolysis of ATP to the transfer of proteins into and across the cell membrane, serving as an ATP-driven molecular motor driving the stepwise translocation of polypeptide chains across the membrane. This Cutibacterium acnes (strain DSM 16379 / KPA171202) (Propionibacterium acnes) protein is Protein translocase subunit SecA.